A 633-amino-acid chain; its full sequence is 1-deoxy-D-xylulose-5-phosphate synthase (633 aa).

Thiamine diphosphate-binding positions include histidine 72 and 113–115 (GHS). Aspartate 144 serves as a coordination point for Mg(2+). Residues 145-146 (GA), asparagine 173, tyrosine 284, and glutamate 367 each bind thiamine diphosphate. Asparagine 173 lines the Mg(2+) pocket.

Belongs to the transketolase family. DXPS subfamily. Homodimer. The cofactor is Mg(2+). Requires thiamine diphosphate as cofactor.

It catalyses the reaction D-glyceraldehyde 3-phosphate + pyruvate + H(+) = 1-deoxy-D-xylulose 5-phosphate + CO2. Its pathway is metabolic intermediate biosynthesis; 1-deoxy-D-xylulose 5-phosphate biosynthesis; 1-deoxy-D-xylulose 5-phosphate from D-glyceraldehyde 3-phosphate and pyruvate: step 1/1. Its function is as follows. Catalyzes the acyloin condensation reaction between C atoms 2 and 3 of pyruvate and glyceraldehyde 3-phosphate to yield 1-deoxy-D-xylulose-5-phosphate (DXP). In Bacillus velezensis (strain DSM 23117 / BGSC 10A6 / LMG 26770 / FZB42) (Bacillus amyloliquefaciens subsp. plantarum), this protein is 1-deoxy-D-xylulose-5-phosphate synthase.